The sequence spans 299 residues: MANFPDSLLILNGKSADNQPLREAITLLRDEGIQIHVRVTWEKGDAQRYVDEARRLGVETVIAGGGDGTINEVSTALIQIRDGVVPALGLLPLGTANDFATSAGIPEALDKALKLAIAGNAMEIDMARVNDKTSFINMATGGFGTRITTETPEKLKAALGGVSYLIHGLMRMDTLKPDRCEIRGENFHWQGNALVIGIGNGRQAGGGQQLCPTALINDGLLQLRIFTGEELLPALFSTLTQSDDNQNIIDGASAWFDIHAPHEITFNLDGEPLSGQEFHIEVLPGALRCRLPPDCPLLR.

The region spanning 2–133 (ANFPDSLLIL…IDMARVNDKT (132 aa)) is the DAGKc domain. ATP is bound by residues Thr40, 66-72 (GDGTINE), and Thr95. Residues Leu215, Asp218, and Leu220 each contribute to the Mg(2+) site. Catalysis depends on Glu271, which acts as the Proton acceptor.

Belongs to the diacylglycerol/lipid kinase family. YegS lipid kinase subfamily. Mg(2+) serves as cofactor. Requires Ca(2+) as cofactor.

Its subcellular location is the cytoplasm. Functionally, probably phosphorylates lipids; the in vivo substrate is unknown. The protein is Probable lipid kinase YegS of Salmonella arizonae (strain ATCC BAA-731 / CDC346-86 / RSK2980).